A 170-amino-acid chain; its full sequence is Capsid protein (170 aa).

Over residues methionine 1–serine 19 the composition is skewed to basic residues. The segment at methionine 1–lysine 25 is disordered.

This sequence belongs to the nanoviridae capsid protein family.

It is found in the virion. The sequence is that of Capsid protein (DNA-S) from Subterranean clover stunt virus (strain J) (SCSV).